The following is a 119-amino-acid chain: Anamorsin homolog (119 aa).

Polar residues predominate over residues 1–15 (MSSSATSTQAFSLKT). Disordered regions lie at residues 1–21 (MSSSATSTQAFSLKTRQPIPD) and 33–119 (LKQA…TDDV). [2Fe-2S] cluster is bound by residues cysteine 42, cysteine 49, cysteine 52, and cysteine 54. The fe-S binding site A stretch occupies residues 42-54 (CTTRRRACKNCVC). Residues cysteine 81, cysteine 84, cysteine 92, and cysteine 95 each coordinate [4Fe-4S] cluster. Short sequence motifs (cx2C motif) lie at residues 81–84 (CGNC) and 92–95 (CANC). Residues 81–95 (CGNCSKGDAFRCANC) form a fe-S binding site B region.

This sequence belongs to the anamorsin family. As to quaternary structure, monomer. [2Fe-2S] cluster serves as cofactor. [4Fe-4S] cluster is required as a cofactor.

The protein resides in the cytoplasm. The protein localises to the mitochondrion intermembrane space. Functionally, component of the cytosolic iron-sulfur (Fe-S) protein assembly (CIA) machinery. Required for the maturation of extramitochondrial Fe-S proteins. Part of an electron transfer chain functioning in an early step of cytosolic Fe-S biogenesis, facilitating the de novo assembly of a [4Fe-4S] cluster on the cytosolic Fe-S scaffold complex. Electrons are transferred from NADPH via a FAD- and FMN-containing diflavin oxidoreductase. Together with the diflavin oxidoreductase, also required for the assembly of the diferric tyrosyl radical cofactor of ribonucleotide reductase (RNR), probably by providing electrons for reduction during radical cofactor maturation in the catalytic small subunit. The sequence is that of Anamorsin homolog from Leishmania infantum.